The sequence spans 229 residues: Cytidylate kinase (229 aa).

7 to 15 (GPAGAGKSS) is an ATP binding site.

Belongs to the cytidylate kinase family. Type 1 subfamily.

The protein localises to the cytoplasm. The enzyme catalyses CMP + ATP = CDP + ADP. The catalysed reaction is dCMP + ATP = dCDP + ADP. The chain is Cytidylate kinase from Rhodopirellula baltica (strain DSM 10527 / NCIMB 13988 / SH1).